The primary structure comprises 557 residues: Glypican-4 (557 aa).

Positions 1 to 18 (MARLGLLALLCTLAALSA) are cleaved as a signal peptide. The residue at position 357 (Ser357) is a Phosphoserine. O-linked (Xyl...) (glycosaminoglycan) serine glycans are attached at residues Ser494, Ser498, and Ser500. The N-linked (GlcNAc...) asparagine glycan is linked to Asn514. Residue Ser529 is the site of GPI-anchor amidated serine attachment. Positions 530 to 557 (AGGAHAEAKPYLLAALCILFLAVQGEWR) are cleaved as a propeptide — removed in mature form.

This sequence belongs to the glypican family. As to expression, highly expressed in developing brain and kidney.

Its subcellular location is the cell membrane. It is found in the secreted. The protein localises to the extracellular space. Functionally, cell surface proteoglycan that bears heparan sulfate. May be involved in the development of kidney tubules and of the central nervous system. The chain is Glypican-4 (Gpc4) from Mus musculus (Mouse).